The chain runs to 815 residues: (-)-kolavenyl diphosphate synthase TPS14, chloroplastic (815 aa).

The N-terminal 51 residues, 1 to 51 (MFMSSSSSSHARRPQLSSFSYLHPPLPFPGLSFFNTRDKRVNFDSTRIICI), are a transit peptide targeting the chloroplast. K247 contacts substrate. Mg(2+) contacts are provided by D379 and D381. The short motif at 379-382 (DIDD) is the DXDD motif element. K465 contributes to the substrate binding site.

The protein belongs to the terpene synthase family. Tpsc subfamily. Mg(2+) is required as a cofactor.

It is found in the plastid. Its subcellular location is the chloroplast. It catalyses the reaction (2E,6E,10E)-geranylgeranyl diphosphate = (-)-kolavenyl diphosphate. Its activity is regulated as follows. Inhibited by high concentrations of magnesium. In terms of biological role, diterpene synthase that catalyzes the formation of (-)-kolavenyl diphosphate from geranylgeranyl diphosphate (GGPP). This is (-)-kolavenyl diphosphate synthase TPS14, chloroplastic from Tripterygium wilfordii (Thunder God vine).